The chain runs to 270 residues: Putative pyruvate, phosphate dikinase regulatory protein 2 (270 aa).

151–158 (GVSRTSKT) lines the ADP pocket.

The protein belongs to the pyruvate, phosphate/water dikinase regulatory protein family. PDRP subfamily.

The catalysed reaction is N(tele)-phospho-L-histidyl/L-threonyl-[pyruvate, phosphate dikinase] + ADP = N(tele)-phospho-L-histidyl/O-phospho-L-threonyl-[pyruvate, phosphate dikinase] + AMP + H(+). It carries out the reaction N(tele)-phospho-L-histidyl/O-phospho-L-threonyl-[pyruvate, phosphate dikinase] + phosphate + H(+) = N(tele)-phospho-L-histidyl/L-threonyl-[pyruvate, phosphate dikinase] + diphosphate. Bifunctional serine/threonine kinase and phosphorylase involved in the regulation of the pyruvate, phosphate dikinase (PPDK) by catalyzing its phosphorylation/dephosphorylation. This Listeria welshimeri serovar 6b (strain ATCC 35897 / DSM 20650 / CCUG 15529 / CIP 8149 / NCTC 11857 / SLCC 5334 / V8) protein is Putative pyruvate, phosphate dikinase regulatory protein 2.